A 557-amino-acid polypeptide reads, in one-letter code: BZIP-type transcription factor MBZ1 (557 aa).

The span at alanine 171–threonine 194 shows a compositional bias: low complexity. Disordered stretches follow at residues alanine 171–isoleucine 209 and methionine 221–arginine 273. Residues glutamate 229 to proline 240 are compositionally biased toward polar residues. Residues arginine 254–glutamine 271 are compositionally biased toward basic and acidic residues. Positions leucine 264 to leucine 327 constitute a bZIP domain. A basic motif region spans residues lysine 267–lysine 286. Positions isoleucine 289 to isoleucine 296 are leucine-zipper. Residues proline 344–asparagine 364 are disordered.

It is found in the nucleus. Its function is as follows. BZIP-type transcription factor that functions as either an activator or a suppressor, and which contributes to the regulation of fungal growth, conidiation, cell wall integrity, and virulence. Plays a key role in virulence against insects by mediating cell wall integrity, cell surface hydrophobicity, and adherence to hydrophobic surfaces. Exhibits negative regulation of subtilisin proteases, but positive control of an adhesin gene. In Metarhizium robertsii (strain ARSEF 23 / ATCC MYA-3075) (Metarhizium anisopliae (strain ARSEF 23)), this protein is BZIP-type transcription factor MBZ1.